We begin with the raw amino-acid sequence, 410 residues long: Putative transposase Rv3428c (410 aa).

An Integrase catalytic domain is found at V40 to E220. A disordered region spans residues A390–P410.

Belongs to the transposase IS21/IS408/IS1162 family.

The chain is Putative transposase Rv3428c from Mycobacterium tuberculosis (strain ATCC 25618 / H37Rv).